The following is a 296-amino-acid chain: MAFKYHKVAIVGKHYKKEVSQMVETLYAYLQQQGLEIIIENDTAADTSLVNVAIASLKEIALRCDVAIVVGGDGNFLKASRLLALYSNIPVIGINKGKLGFLTTLAADDNALKNDLYAILKGDSSVTKMSMLKYRVDNNLRAPLEASIALNEIAITASRGLMFGLKVFIDGRYAFDQRGDGLIVSTPTGSTAHAMSAGGPILNPNQNSVVLVPICSHSLNSRPLVISDESVIDIYITDYNDPESVLSIDGRHDTILKAHQKVTIQKARKKVTVLHTKDYNYYDTLREKLGWSKVLF.

Residue D73 is the Proton acceptor of the active site. Residues 73–74, K78, 151–152, R178, D180, and 191–196 each bind NAD(+); these read DG, NE, and TAHAMS.

This sequence belongs to the NAD kinase family. A divalent metal cation is required as a cofactor.

It localises to the cytoplasm. The enzyme catalyses NAD(+) + ATP = ADP + NADP(+) + H(+). In terms of biological role, involved in the regulation of the intracellular balance of NAD and NADP, and is a key enzyme in the biosynthesis of NADP. Catalyzes specifically the phosphorylation on 2'-hydroxyl of the adenosine moiety of NAD to yield NADP. This is NAD kinase from Francisella tularensis subsp. tularensis (strain WY96-3418).